Here is a 660-residue protein sequence, read N- to C-terminus: Bifunctional polymyxin resistance protein ArnA (660 aa).

The tract at residues 1–304 is formyltransferase ArnAFT; sequence MKAVVFAYHN…EMYLVEGMRF (304 aa). His104 functions as the Proton donor; for formyltransferase activity in the catalytic mechanism. (6R)-10-formyltetrahydrofolate-binding positions include Arg114 and 136–140; that span reads TVKPD. Residues 316-660 form a dehydrogenase ArnADH region; the sequence is RRQKVLIMGA…FLKTAVEETK (345 aa). NAD(+) contacts are provided by residues Asp349 and 370-371; that span reads DI. UDP-alpha-D-glucuronate-binding positions include Ala395, Tyr400, and 434–435; that span reads TS. Glu436 serves as the catalytic Proton acceptor; for decarboxylase activity. UDP-alpha-D-glucuronate-binding positions include Arg462, Asn494, 528-537, and Tyr615; that span reads KLIDGGEQKR. The Proton donor; for decarboxylase activity role is filled by Arg621.

It in the N-terminal section; belongs to the Fmt family. UDP-L-Ara4N formyltransferase subfamily. This sequence in the C-terminal section; belongs to the NAD(P)-dependent epimerase/dehydratase family. UDP-glucuronic acid decarboxylase subfamily. In terms of assembly, homohexamer, formed by a dimer of trimers.

The enzyme catalyses UDP-alpha-D-glucuronate + NAD(+) = UDP-beta-L-threo-pentopyranos-4-ulose + CO2 + NADH. It carries out the reaction UDP-4-amino-4-deoxy-beta-L-arabinose + (6R)-10-formyltetrahydrofolate = UDP-4-deoxy-4-formamido-beta-L-arabinose + (6S)-5,6,7,8-tetrahydrofolate + H(+). It participates in nucleotide-sugar biosynthesis; UDP-4-deoxy-4-formamido-beta-L-arabinose biosynthesis; UDP-4-deoxy-4-formamido-beta-L-arabinose from UDP-alpha-D-glucuronate: step 1/3. Its pathway is nucleotide-sugar biosynthesis; UDP-4-deoxy-4-formamido-beta-L-arabinose biosynthesis; UDP-4-deoxy-4-formamido-beta-L-arabinose from UDP-alpha-D-glucuronate: step 3/3. It functions in the pathway bacterial outer membrane biogenesis; lipopolysaccharide biosynthesis. Functionally, bifunctional enzyme that catalyzes the oxidative decarboxylation of UDP-glucuronic acid (UDP-GlcUA) to UDP-4-keto-arabinose (UDP-Ara4O) and the addition of a formyl group to UDP-4-amino-4-deoxy-L-arabinose (UDP-L-Ara4N) to form UDP-L-4-formamido-arabinose (UDP-L-Ara4FN). The modified arabinose is attached to lipid A and is required for resistance to polymyxin and cationic antimicrobial peptides. The polypeptide is Bifunctional polymyxin resistance protein ArnA (Shewanella sediminis (strain HAW-EB3)).